A 359-amino-acid polypeptide reads, in one-letter code: Peptide chain release factor 1 (359 aa).

Q236 carries the N5-methylglutamine modification.

This sequence belongs to the prokaryotic/mitochondrial release factor family. Methylated by PrmC. Methylation increases the termination efficiency of RF1.

It is found in the cytoplasm. Its function is as follows. Peptide chain release factor 1 directs the termination of translation in response to the peptide chain termination codons UAG and UAA. In Streptococcus pyogenes serotype M6 (strain ATCC BAA-946 / MGAS10394), this protein is Peptide chain release factor 1.